The primary structure comprises 286 residues: Ribose-phosphate pyrophosphokinase (286 aa).

ATP-binding positions include 34–36 and 91–92; these read DGE and RQ. Mg(2+) contacts are provided by His-124 and Asp-161. The active site involves Lys-184. D-ribose 5-phosphate contacts are provided by residues Arg-186, Asp-210, and 214 to 218; that span reads STGGT.

Belongs to the ribose-phosphate pyrophosphokinase family. Class III (archaeal) subfamily. It depends on Mg(2+) as a cofactor.

It is found in the cytoplasm. It catalyses the reaction D-ribose 5-phosphate + ATP = 5-phospho-alpha-D-ribose 1-diphosphate + AMP + H(+). The protein operates within metabolic intermediate biosynthesis; 5-phospho-alpha-D-ribose 1-diphosphate biosynthesis; 5-phospho-alpha-D-ribose 1-diphosphate from D-ribose 5-phosphate (route I): step 1/1. Involved in the biosynthesis of the central metabolite phospho-alpha-D-ribosyl-1-pyrophosphate (PRPP) via the transfer of pyrophosphoryl group from ATP to 1-hydroxyl of ribose-5-phosphate (Rib-5-P). The polypeptide is Ribose-phosphate pyrophosphokinase (Thermoplasma acidophilum (strain ATCC 25905 / DSM 1728 / JCM 9062 / NBRC 15155 / AMRC-C165)).